Here is an 89-residue protein sequence, read N- to C-terminus: Nucleoside triphosphatase I (89 aa).

The Helicase ATP-binding domain occupies 42 to 89 (FLGLDKMHSLLLFHDTGVGKTITTTFIIKQLKNIYTNWSILLLVKKHL). 55 to 62 (HDTGVGKT) is an ATP binding site.

It belongs to the helicase family. NPH I subfamily.

It carries out the reaction a ribonucleoside 5'-triphosphate + H2O = a ribonucleoside 5'-diphosphate + phosphate + H(+). In terms of biological role, serves two roles in transcription; it acts in concert with viral termination factor/capping enzyme to catalyze release of UUUUUNU-containing nascent RNA from the elongation complex, and it acts by itself as a polymerase elongation factor to facilitate readthrough of intrinsic pause sites. In Swinepox virus (strain Kasza) (SWPV), this protein is Nucleoside triphosphatase I (NPH1).